A 197-amino-acid polypeptide reads, in one-letter code: Peptidyl-tRNA hydrolase (197 aa).

TRNA is bound at residue tyrosine 21. Histidine 26 acts as the Proton acceptor in catalysis. Positions 72, 74, and 120 each coordinate tRNA.

Belongs to the PTH family. Monomer.

The protein localises to the cytoplasm. The enzyme catalyses an N-acyl-L-alpha-aminoacyl-tRNA + H2O = an N-acyl-L-amino acid + a tRNA + H(+). Its function is as follows. Hydrolyzes ribosome-free peptidyl-tRNAs (with 1 or more amino acids incorporated), which drop off the ribosome during protein synthesis, or as a result of ribosome stalling. In terms of biological role, catalyzes the release of premature peptidyl moieties from peptidyl-tRNA molecules trapped in stalled 50S ribosomal subunits, and thus maintains levels of free tRNAs and 50S ribosomes. This Saccharophagus degradans (strain 2-40 / ATCC 43961 / DSM 17024) protein is Peptidyl-tRNA hydrolase.